We begin with the raw amino-acid sequence, 565 residues long: Thiol:disulfide interchange protein DsbD (565 aa).

The first 19 residues, 1–19, serve as a signal peptide directing secretion; it reads MAQRIFTLILLLCSTSVFA. Cystine bridges form between cysteine 122-cysteine 128 and cysteine 182-cysteine 304. A run of 7 helical transmembrane segments spans residues 163 to 183, 208 to 228, 243 to 263, 296 to 316, 323 to 343, 365 to 385, and 386 to 406; these read LPFS…TPCV, LLTF…GLVV, YVLI…FGLF, IAGL…LLYI, WLGG…LMLI, FGFV…GDIW, and GLRL…ITSL. A Thioredoxin domain is found at 434–565; it reads WAFGATHTAQ…FSAHLRDRQP (132 aa). Cysteines 480 and 483 form a disulfide.

The protein belongs to the thioredoxin family. DsbD subfamily.

Its subcellular location is the cell inner membrane. The enzyme catalyses [protein]-dithiol + NAD(+) = [protein]-disulfide + NADH + H(+). It carries out the reaction [protein]-dithiol + NADP(+) = [protein]-disulfide + NADPH + H(+). Required to facilitate the formation of correct disulfide bonds in some periplasmic proteins and for the assembly of the periplasmic c-type cytochromes. Acts by transferring electrons from cytoplasmic thioredoxin to the periplasm. This transfer involves a cascade of disulfide bond formation and reduction steps. This chain is Thiol:disulfide interchange protein DsbD, found in Shigella dysenteriae serotype 1 (strain Sd197).